The following is a 501-amino-acid chain: Phase 2 flagellin (501 aa).

It belongs to the bacterial flagellin family.

The protein resides in the secreted. The protein localises to the bacterial flagellum. Flagellin is the subunit protein which polymerizes to form the filaments of bacterial flagella. The protein is Phase 2 flagellin (fljB) of Salmonella abortus-equi.